Consider the following 244-residue polypeptide: Cobalt transport protein CbiM (244 aa).

The signal sequence occupies residues 1–28 (MKLLKNKKVTFVALLAILAVLSTQSVSA). 6 helical membrane-spanning segments follow: residues 36 to 56 (LPLF…VVGL), 71 to 91 (TMLA…IPSV), 108 to 128 (FGPS…ALLL), 135 to 155 (TLGA…YFVY), 166 to 186 (PVSI…TTSI), and 208 to 228 (GVFL…TVVL).

Belongs to the CbiM family. As to quaternary structure, forms an energy-coupling factor (ECF) transporter complex composed of an ATP-binding protein (A component, CbiO), a transmembrane protein (T component, CbiQ) and 2 possible substrate-capture proteins (S components, CbiM and CbiN) of unknown stoichimetry.

The protein resides in the cell membrane. Its pathway is cofactor biosynthesis; adenosylcobalamin biosynthesis. Its function is as follows. Part of the energy-coupling factor (ECF) transporter complex CbiMNOQ involved in cobalt import. This chain is Cobalt transport protein CbiM, found in Streptococcus sanguinis (strain SK36).